Here is a 174-residue protein sequence, read N- to C-terminus: Keratin-associated protein 1-5 (174 aa).

The tract at residues 3–172 (CCQTSFCGYP…CCRPVCCCEP (170 aa)) is 15 X 5 AA repeats of C-C-[QEPVRC]-[TPIVLE]-[SRHVP].

The protein belongs to the KRTAP type 1 family. As to quaternary structure, interacts with hair keratins. As to expression, expressed in the middle/upper portions of the hair cortex, in the region termed the keratogenous zone.

Its function is as follows. In the hair cortex, hair keratin intermediate filaments are embedded in an interfilamentous matrix, consisting of hair keratin-associated proteins (KRTAP), which are essential for the formation of a rigid and resistant hair shaft through their extensive disulfide bond cross-linking with abundant cysteine residues of hair keratins. The matrix proteins include the high-sulfur and high-glycine-tyrosine keratins. This Homo sapiens (Human) protein is Keratin-associated protein 1-5 (KRTAP1-5).